The sequence spans 300 residues: N-carbamoylputrescine amidase (300 aa).

One can recognise a CN hydrolase domain in the interval 8-266; the sequence is VTVAALQFAC…EAVLVAQFDL (259 aa). Catalysis depends on Glu-47, which acts as the Proton acceptor. Lys-120 acts as the Proton donor in catalysis. The Nucleophile role is filled by Cys-157.

It belongs to the carbon-nitrogen hydrolase superfamily. In terms of assembly, homooctamer.

It carries out the reaction N-carbamoylputrescine + H2O + 2 H(+) = putrescine + NH4(+) + CO2. It participates in amine and polyamine biosynthesis; putrescine biosynthesis via agmatine pathway; putrescine from N-carbamoylputrescine (amidase route): step 1/1. Its function is as follows. Involved in polyamine biosynthesis. In Solanum tuberosum (Potato), this protein is N-carbamoylputrescine amidase (CPA).